The chain runs to 504 residues: Signal transduction histidine-protein kinase/phosphatase MprB (504 aa).

The Cytoplasmic portion of the chain corresponds to 1 to 26 (MWWFRRRDRAPLRATSSLSLRWRVML). Residues 27–47 (LAMSMVAMVVVLMSFAVYAVI) form a helical membrane-spanning segment. Topologically, residues 48-163 (SAALYSDIDN…PTEAVMNKLR (116 aa)) are extracellular. The helical transmembrane segment at 164 to 184 (WVLLIVGGIGVAVAAVAGGMV) threads the bilayer. Residues 185–504 (TRAGLRPVGR…SVESQSTRAT (320 aa)) are Cytoplasmic-facing. The HAMP domain occupies 186–238 (RAGLRPVGRLTEAAERVARTDDLRPIPVFGSDELARLTEAFNLMLRALAESRE). Residues 246–466 (DAGHELRTPL…SIYVLLPGRR (221 aa)) form the Histidine kinase domain. His249 carries the phosphohistidine; by autocatalysis modification. The tract at residues 471–504 (QLPGATAGARSTDIENSRGSANVISVESQSTRAT) is disordered. Positions 487–504 (SRGSANVISVESQSTRAT) are enriched in polar residues.

The cofactor is Mg(2+). Mn(2+) serves as cofactor. In terms of processing, autophosphorylated.

Its subcellular location is the cell membrane. It catalyses the reaction ATP + protein L-histidine = ADP + protein N-phospho-L-histidine.. Functionally, member of the two-component regulatory system MprB/MprA which contributes to maintaining a balance among several systems involved in stress resistance and is required for establishment and maintenance of persistent infection in the host. In response to environmental signals MprB acts both as a membrane-associated protein kinase that undergoes autophosphorylation and subsequently transfers the phosphate to MprA, and a protein phosphatase that dephosphorylates phospho-MprA. MprB/MprA up-regulates expression of mprA and pepD. The chain is Signal transduction histidine-protein kinase/phosphatase MprB (mprB) from Mycobacterium bovis (strain ATCC BAA-935 / AF2122/97).